The following is a 357-amino-acid chain: Alanine racemase (357 aa).

Residue lysine 35 is the Proton acceptor; specific for D-alanine of the active site. Lysine 35 carries the N6-(pyridoxal phosphate)lysine modification. Arginine 131 is a substrate binding site. The Proton acceptor; specific for L-alanine role is filled by tyrosine 256. Residue methionine 304 participates in substrate binding.

Belongs to the alanine racemase family. It depends on pyridoxal 5'-phosphate as a cofactor.

It carries out the reaction L-alanine = D-alanine. It participates in amino-acid biosynthesis; D-alanine biosynthesis; D-alanine from L-alanine: step 1/1. Functionally, catalyzes the interconversion of L-alanine and D-alanine. May also act on other amino acids. This Legionella pneumophila (strain Paris) protein is Alanine racemase (alr).